Reading from the N-terminus, the 366-residue chain is Putative [LysW]-aminoadipate semialdehyde/glutamate semialdehyde transaminase (366 aa).

Pyridoxal 5'-phosphate-binding positions include 90–91 (GT) and F117. R120 contacts substrate. 202-205 (DEVQ) is a pyridoxal 5'-phosphate binding site. K230 carries the N6-(pyridoxal phosphate)lysine modification. S254 contributes to the substrate binding site. T255 serves as a coordination point for pyridoxal 5'-phosphate.

Belongs to the class-III pyridoxal-phosphate-dependent aminotransferase family. LysJ subfamily. As to quaternary structure, homodimer. Requires pyridoxal 5'-phosphate as cofactor.

The protein resides in the cytoplasm. It catalyses the reaction [amino-group carrier protein]-C-terminal-gamma-(L-lysyl)-L-glutamate + 2-oxoglutarate = [amino-group carrier protein]-C-terminal-N-(1-carboxy-5-oxopentan-1-yl)-L-glutamine + L-glutamate. The catalysed reaction is [amino-group carrier protein]-C-terminal-gamma-(L-ornithyl)-L-glutamate + 2-oxoglutarate = [amino-group carrier protein]-C-terminal-gamma-(L-glutamyl-5-semialdehyde)-L-glutamate + L-glutamate. It functions in the pathway amino-acid biosynthesis; L-lysine biosynthesis via AAA pathway; L-lysine from L-alpha-aminoadipate (Thermus route): step 4/5. Its pathway is amino-acid biosynthesis; L-arginine biosynthesis. Involved in both the arginine and lysine biosynthetic pathways. This is Putative [LysW]-aminoadipate semialdehyde/glutamate semialdehyde transaminase from Pyrococcus horikoshii (strain ATCC 700860 / DSM 12428 / JCM 9974 / NBRC 100139 / OT-3).